The chain runs to 588 residues: Peptidoglycan D,D-transpeptidase FtsI (588 aa).

Residues 19–39 (FISWRFALLCGCILLALAFLL) traverse the membrane as a helical segment. The active-site Acyl-ester intermediate is the Ser307. Positions 578-588 (INQGEGTGGRS) are excised as a propeptide.

It belongs to the transpeptidase family. FtsI subfamily.

It is found in the cell inner membrane. The catalysed reaction is Preferential cleavage: (Ac)2-L-Lys-D-Ala-|-D-Ala. Also transpeptidation of peptidyl-alanyl moieties that are N-acyl substituents of D-alanine.. The protein operates within cell wall biogenesis; peptidoglycan biosynthesis. Functionally, catalyzes cross-linking of the peptidoglycan cell wall at the division septum. The sequence is that of Peptidoglycan D,D-transpeptidase FtsI from Escherichia coli O157:H7.